We begin with the raw amino-acid sequence, 345 residues long: Phosphoribosylformylglycinamidine cyclo-ligase (345 aa).

Belongs to the AIR synthase family.

It is found in the cytoplasm. The catalysed reaction is 2-formamido-N(1)-(5-O-phospho-beta-D-ribosyl)acetamidine + ATP = 5-amino-1-(5-phospho-beta-D-ribosyl)imidazole + ADP + phosphate + H(+). It functions in the pathway purine metabolism; IMP biosynthesis via de novo pathway; 5-amino-1-(5-phospho-D-ribosyl)imidazole from N(2)-formyl-N(1)-(5-phospho-D-ribosyl)glycinamide: step 2/2. The protein is Phosphoribosylformylglycinamidine cyclo-ligase of Limosilactobacillus reuteri (strain DSM 20016) (Lactobacillus reuteri).